The primary structure comprises 149 residues: UPF0310 protein SSO2595 (149 aa).

It belongs to the UPF0310 family.

The sequence is that of UPF0310 protein SSO2595 from Saccharolobus solfataricus (strain ATCC 35092 / DSM 1617 / JCM 11322 / P2) (Sulfolobus solfataricus).